Here is a 238-residue protein sequence, read N- to C-terminus: Xyloglucan-specific endo-beta-1,4-glucanase A (238 aa).

The first 14 residues, 1 to 14 (MKLSLLSLATLASA), serve as a signal peptide directing secretion.

It belongs to the glycosyl hydrolase 12 (cellulase H) family.

The protein resides in the secreted. The enzyme catalyses xyloglucan + H2O = xyloglucan oligosaccharides.. Its function is as follows. Catalyzes endohydrolysis of 1,4-beta-D-glucosidic linkages in xyloglucan with retention of the beta-configuration of the glycosyl residues. Specific for xyloglucan and does not hydrolyze other cell wall components. The protein is Xyloglucan-specific endo-beta-1,4-glucanase A (xgeA) of Aspergillus aculeatus.